Here is a 238-residue protein sequence, read N- to C-terminus: uncharacterized protein (238 aa).

This is an uncharacterized protein from Mycobacterium tuberculosis (strain ATCC 25618 / H37Rv).